A 1210-amino-acid polypeptide reads, in one-letter code: Multimerin-1 (1210 aa).

The signal sequence occupies residues 1–19 (MLGLKFLVLLSILWGRVFR). Residues 57–102 (ATQNPSTQGPAAAERSSEDDVLLQSTSQPSETSTPPEGRHQTPLEK) are disordered. Positions 80–92 (QSTSQPSETSTPP) are enriched in low complexity. The N-linked (GlcNAc...) asparagine glycan is linked to Asn-133. Positions 143–155 (SRKSDQQEVSTKS) are enriched in polar residues. Residues 143–190 (SRKSDQQEVSTKSAGDMGNRSARETHLRRSDNSRNQRPSYQKPSFETT) are disordered. Asn-161 carries N-linked (GlcNAc...) asparagine glycosylation. Basic and acidic residues predominate over residues 163 to 176 (SARETHLRRSDNSR). The segment covering 177–189 (NQRPSYQKPSFET) has biased composition (polar residues). Residues 192 to 267 (GKNWCAHVHT…PGYIGPNCQL (76 aa)) form the EMI domain. Intrachain disulfides connect Cys-196–Cys-257, Cys-222–Cys-230, and Cys-256–Cys-265. Thr-201 carries an O-linked (Fuc) threonine glycan. An O-linked (Fuc) threonine glycan is attached at Thr-250. A disordered region spans residues 276-299 (AHSNQAESHTAVDQGRAQQQKQDC). A coiled-coil region spans residues 303–338 (AMIQKLAEQLSQQERKLSLLQKKVDNASLVADDMRN). N-linked (GlcNAc...) asparagine glycans are attached at residues Asn-328, Asn-415, Asn-491, Asn-525, Asn-560, Asn-602, Asn-712, Asn-765, Asn-810, Asn-822, Asn-903, Asn-915, Asn-963, and Asn-1000. Residues 564 to 690 (LLEMEKESAR…RHNLLRNEVQ (127 aa)) are a coiled coil. A coiled-coil region spans residues 809–846 (FNETTSQVNKCQQNMSHLEENMLSVTKTAKEFETRLQG). The region spanning 1023–1059 (EHSSCSSFPCQNGGTCISGRSNFICACRHPFMGDTCT) is the EGF-like domain. Cystine bridges form between Cys-1027/Cys-1038, Cys-1032/Cys-1047, and Cys-1049/Cys-1058. Thr-1037 carries O-linked (Fuc) threonine glycosylation. A C1q domain is found at 1078–1210 (RYAPMVAFFV…TFSGYLLYRT (133 aa)).

Multimeric. Composed of varying sized, disulfide-linked multimers, the smallest of which is a homotrimer. Proteolysis of the promultimerin in the N-terminal region, leads to the mature p155 form that is stored in platelets. Interacts with factor V/Va. In terms of processing, extensively N-glycosylated. Post-translationally, O-fucosylated within the EMI domain (at Thr-201 and Thr-250) by FUT10/POFUT3 and FUT11/POFUT4. O-fucosylation at Thr-201 and Thr-1037 are required for facilitating protein folding and secretion.

Its subcellular location is the secreted. Carrier protein for platelet (but not plasma) factor V/Va. Plays a role in the storage and stabilization of factor V in platelets. Upon release following platelet activation, may limit platelet and plasma factor Va-dependent thrombin generation. Ligand for integrin alpha-IIb/beta-3 and integrin alpha-V/beta-3 on activated platelets, and may function as an extracellular matrix or adhesive protein. This Mus musculus (Mouse) protein is Multimerin-1.